A 347-amino-acid polypeptide reads, in one-letter code: MAIDEDKQKAISLAIKQIDKVFGKGALVRLGDKQVEKIDAISTGSLGLDLALGIGGVPKGRIIEIYGPESSGKTTLSLHIIAECQKNGGVCAFIDAEHALDVHYAKRLGVDTQNLLVSQPDTGEQALEILETITRSGGIDLVVVDSVAALTPKAEIDGDMGDQHVGLQARLMSHALRKITGVLHKMNTTLIFINQIRMKIGMMGYGSPETTTGGNALKFYASVRIDIRRIASLKQNEQHIGNRAKAKVVKNKVAPPFREAEFDIMFGEGISKEGEIIDYGVKLDIVDKSGAWLSYQDKKLGQGRENAKALLKEDKALADEITLKIKESIGSNEEIMPLPDEPLEEME.

67 to 74 is an ATP binding site; it reads GPESSGKT.

The protein belongs to the RecA family.

It localises to the cytoplasm. In terms of biological role, can catalyze the hydrolysis of ATP in the presence of single-stranded DNA, the ATP-dependent uptake of single-stranded DNA by duplex DNA, and the ATP-dependent hybridization of homologous single-stranded DNAs. It interacts with LexA causing its activation and leading to its autocatalytic cleavage. This is Protein RecA from Helicobacter pylori (strain G27).